Reading from the N-terminus, the 201-residue chain is MAEKFTQHTGLVVPLDAANVDTDAIIPKQFLQKVTRTGFGAHLFNDWRFLDDKGQQPNPDFVLNFPQYKGASILLARENFGCGSSREHAPWALTDYGFKVVIAPSFADIFYGNSFNNQLLPVTLSDEQVDELFKLVQANPGMTFEVDLEAQVVKAGDKTYSFKIDDFRRHCMLNGLDSIGLTLQHGEAISDYERKLPAFMN.

Belongs to the LeuD family. LeuD type 1 subfamily. Heterodimer of LeuC and LeuD.

It carries out the reaction (2R,3S)-3-isopropylmalate = (2S)-2-isopropylmalate. It functions in the pathway amino-acid biosynthesis; L-leucine biosynthesis; L-leucine from 3-methyl-2-oxobutanoate: step 2/4. In terms of biological role, catalyzes the isomerization between 2-isopropylmalate and 3-isopropylmalate, via the formation of 2-isopropylmaleate. The protein is 3-isopropylmalate dehydratase small subunit of Klebsiella pneumoniae (strain 342).